The following is a 261-amino-acid chain: MTHQTHAYHMVNPSPWPLTGALSALLMTSGLTMWFHFNSMTLLMIGLTTNMLTMYQWWRDVIRESTFQGHHTPAVQKGLRYGMILFIISEVLFFTGFFWAFYHSSLAPTPELGGCWPPTGIHPLNPLEVPLLNTSVLLASGVSITWAHHSLMEGDRKHMLQALFITITLGVYFTLLQASEYYEAPFTISDGVYGSTFFVATGFHGLHVIIGSTFLIVCFFRQLKFHFTSNHHFGFEAAAWYWHFVDVVWLFLYVSIYWWGS.

Residues 1–15 (MTHQTHAYHMVNPSP) are Mitochondrial matrix-facing. Residues 16 to 34 (WPLTGALSALLMTSGLTMW) traverse the membrane as a helical segment. Residues 35–40 (FHFNSM) lie on the Mitochondrial intermembrane side of the membrane. The chain crosses the membrane as a helical span at residues 41 to 66 (TLLMIGLTTNMLTMYQWWRDVIREST). The Mitochondrial matrix segment spans residues 67–72 (FQGHHT). Residues 73–105 (PAVQKGLRYGMILFIISEVLFFTGFFWAFYHSS) traverse the membrane as a helical segment. The Mitochondrial intermembrane segment spans residues 106-128 (LAPTPELGGCWPPTGIHPLNPLE). The chain crosses the membrane as a helical span at residues 129 to 152 (VPLLNTSVLLASGVSITWAHHSLM). Topologically, residues 153–155 (EGD) are mitochondrial matrix. A helical transmembrane segment spans residues 156-183 (RKHMLQALFITITLGVYFTLLQASEYYE). The Mitochondrial intermembrane segment spans residues 184 to 190 (APFTISD). Residues 191–223 (GVYGSTFFVATGFHGLHVIIGSTFLIVCFFRQL) form a helical membrane-spanning segment. Residues 224 to 232 (KFHFTSNHH) lie on the Mitochondrial matrix side of the membrane. Residues 233–256 (FGFEAAAWYWHFVDVVWLFLYVSI) form a helical membrane-spanning segment. The Mitochondrial intermembrane portion of the chain corresponds to 257–261 (YWWGS).

The protein belongs to the cytochrome c oxidase subunit 3 family. Component of the cytochrome c oxidase (complex IV, CIV), a multisubunit enzyme composed of 14 subunits. The complex is composed of a catalytic core of 3 subunits MT-CO1, MT-CO2 and MT-CO3, encoded in the mitochondrial DNA, and 11 supernumerary subunits COX4I1 (or COX4I2), COX5A, COX5B, COX6A2 (or COX6A1), COX6B1 (or COX6B2), COX6C, COX7A1 (or COX7A2), COX7B, COX7C, COX8B and NDUFA4, which are encoded in the nuclear genome. The complex exists as a monomer or a dimer and forms supercomplexes (SCs) in the inner mitochondrial membrane with NADH-ubiquinone oxidoreductase (complex I, CI) and ubiquinol-cytochrome c oxidoreductase (cytochrome b-c1 complex, complex III, CIII), resulting in different assemblies (supercomplex SCI(1)III(2)IV(1) and megacomplex MCI(2)III(2)IV(2)).

The protein resides in the mitochondrion inner membrane. The catalysed reaction is 4 Fe(II)-[cytochrome c] + O2 + 8 H(+)(in) = 4 Fe(III)-[cytochrome c] + 2 H2O + 4 H(+)(out). Functionally, component of the cytochrome c oxidase, the last enzyme in the mitochondrial electron transport chain which drives oxidative phosphorylation. The respiratory chain contains 3 multisubunit complexes succinate dehydrogenase (complex II, CII), ubiquinol-cytochrome c oxidoreductase (cytochrome b-c1 complex, complex III, CIII) and cytochrome c oxidase (complex IV, CIV), that cooperate to transfer electrons derived from NADH and succinate to molecular oxygen, creating an electrochemical gradient over the inner membrane that drives transmembrane transport and the ATP synthase. Cytochrome c oxidase is the component of the respiratory chain that catalyzes the reduction of oxygen to water. Electrons originating from reduced cytochrome c in the intermembrane space (IMS) are transferred via the dinuclear copper A center (CU(A)) of subunit 2 and heme A of subunit 1 to the active site in subunit 1, a binuclear center (BNC) formed by heme A3 and copper B (CU(B)). The BNC reduces molecular oxygen to 2 water molecules using 4 electrons from cytochrome c in the IMS and 4 protons from the mitochondrial matrix. The protein is Cytochrome c oxidase subunit 3 (MT-CO3) of Bos taurus (Bovine).